Reading from the N-terminus, the 798-residue chain is Exo-1,4-beta-xylosidase xlnD (798 aa).

The first 20 residues, 1-20 (MPGAASIVAVLAALLPTALG), serve as a signal peptide directing secretion. N-linked (GlcNAc...) asparagine glycans are attached at residues Asn-23, Asn-87, Asn-142, and Asn-237. Residue Asp-310 is part of the active site. N-linked (GlcNAc...) asparagine glycosylation is found at Asn-326, Asn-391, Asn-404, Asn-443, Asn-480, Asn-522, Asn-618, Asn-645, Asn-658, Asn-685, and Asn-707.

Belongs to the glycosyl hydrolase 3 family.

The protein localises to the secreted. It carries out the reaction Hydrolysis of (1-&gt;4)-beta-D-xylans, to remove successive D-xylose residues from the non-reducing termini.. Its pathway is glycan degradation; xylan degradation. Xylan 1,4-beta-xylosidase involved in the hydrolysis of xylan, a major structural heterogeneous polysaccharide found in plant biomass representing the second most abundant polysaccharide in the biosphere, after cellulose. This Aspergillus oryzae (strain ATCC 42149 / RIB 40) (Yellow koji mold) protein is Exo-1,4-beta-xylosidase xlnD (xlnD).